Reading from the N-terminus, the 446-residue chain is Putative zinc metalloprotease NMA0084 (446 aa).

His18 lines the Zn(2+) pocket. Glu19 is a catalytic residue. His22 contacts Zn(2+). Transmembrane regions (helical) follow at residues 93–115, 376–398, and 419–438; these read IAIVAAGPLTNLALAVLLYGLSF, FLALVSISLGVLNLLPVPVLDGG, and NIGLRFGLALMMLMMAVAFF. In terms of domain architecture, PDZ spans 100–181; sequence PLTNLALAVL…KVAVGVQTAS (82 aa).

This sequence belongs to the peptidase M50B family. It depends on Zn(2+) as a cofactor.

It localises to the cell inner membrane. The polypeptide is Putative zinc metalloprotease NMA0084 (Neisseria meningitidis serogroup A / serotype 4A (strain DSM 15465 / Z2491)).